The primary structure comprises 624 residues: Ceramide transfer protein (624 aa).

Polar residues predominate over residues 1–11; sequence MSDNQSWNSSG. The interval 1–24 is disordered; it reads MSDNQSWNSSGSEEDPETESGPPV. The region spanning 23–117 is the PH domain; the sequence is PVERCGVLSK…WIDAIEQHKT (95 aa). A Phosphoserine modification is found at S126. S132 bears the Phosphoserine; by PKD mark. At S135 the chain carries Phosphoserine. Residues 263–303 are a coiled coil; the sequence is IELMVKREDSWQKRLDKETEKKRRTEEAYKNAMTELKKKSH. Residue S315 is modified to Phosphoserine. The short motif at 321–327 is the FFAT element; that stretch reads EFFDAVE. Y372 carries the phosphotyrosine modification. S373, S377, and S380 each carry phosphoserine. One can recognise an START domain in the interval 389–618; the sequence is DVHRFSSQVE…FTSYVQEKTA (230 aa). The an N-acylsphing-4-enine site is built by E472, Q493, N530, and Y579.

Interacts with VAPA and VAPB. Interaction with VAPB is less efficient than with VAPA. Interacts (via FFAT motif) with MOSPD2 (via MSP domain). Phosphorylation on Ser-132 decreases the affinity toward phosphatidylinositol 4-phosphate at Golgi membranes and reduces ceramide transfer activity. Inactivated by hyperphosphorylation of serine residues by CSNK1G2/CK1 that triggers dissociation from the Golgi complex, thus down-regulating ER-to-Golgi transport of ceramide and sphingomyelin synthesis. In terms of tissue distribution, widely expressed.

It localises to the cytoplasm. Its subcellular location is the golgi apparatus. The protein resides in the endoplasmic reticulum. It catalyses the reaction N-hexadecanoylsphing-4-enine(in) = N-hexadecanoylsphing-4-enine(out). Shelters ceramides and diacylglycerol lipids inside its START domain and mediates the intracellular trafficking of ceramides and diacylglycerol lipids in a non-vesicular manner. The sequence is that of Ceramide transfer protein from Homo sapiens (Human).